A 1892-amino-acid chain; its full sequence is Protein TIC 214 (1892 aa).

The next 6 membrane-spanning stretches (helical) occupy residues 12–32 (LISL…YYGF), 68–88 (FIAG…HLAL), 89–109 (GKPH…FFWN), 128–148 (LSIQ…HFIL), 176–196 (VGWL…LVWI), and 225–245 (IFSI…PSPI). Acidic residues predominate over residues 256–266 (PEEVGESEEER). Residues 256–299 (PEEVGESEEERNIEIETISEGGGANQKQGTEENTSSSLFSEEEV) are disordered. The segment covering 280-294 (NQKQGTEENTSSSLF) has biased composition (polar residues). The chain crosses the membrane as a helical span at residues 1115-1135 (FYFFINFFIEKIYMDILLYII). The tract at residues 1613 to 1636 (SNQEKDVEEDYDKSDKKKRRKKKQ) is disordered.

It belongs to the TIC214 family. In terms of assembly, part of the Tic complex.

Its subcellular location is the plastid. It is found in the chloroplast inner membrane. Functionally, involved in protein precursor import into chloroplasts. May be part of an intermediate translocation complex acting as a protein-conducting channel at the inner envelope. The chain is Protein TIC 214 from Gossypium hirsutum (Upland cotton).